The following is a 193-amino-acid chain: dCTP deaminase (193 aa).

Residues 110–115 (RSSLAR), Asp-128, 136–138 (VLE), Tyr-171, Lys-178, and Gln-182 each bind dCTP. The active-site Proton donor/acceptor is the Glu-138.

Belongs to the dCTP deaminase family. In terms of assembly, homotrimer.

It carries out the reaction dCTP + H2O + H(+) = dUTP + NH4(+). It participates in pyrimidine metabolism; dUMP biosynthesis; dUMP from dCTP (dUTP route): step 1/2. In terms of biological role, catalyzes the deamination of dCTP to dUTP. The protein is dCTP deaminase of Buchnera aphidicola subsp. Baizongia pistaciae (strain Bp).